Consider the following 348-residue polypeptide: EGF-like domain-containing protein 1 (348 aa).

The first 19 residues, 1-19 (MFYLSTFMTIVISLSLVSC), serve as a signal peptide directing secretion. An EGF-like domain is found at 60–92 (TGSNCTVTCQNNGKCYDGSKCLCSSDYTGDLCE). 3 cysteine pairs are disulfide-bonded: C64–C74, C68–C80, and C82–C91. Residues 99–342 (RCTLDAVVFE…PTCAAPXVGQ (244 aa)) enclose the ZP domain.

In terms of tissue distribution, prismatic layer of shell (at protein level). Expressed primarily in the mantle with highest level in the mantle edge and lower level in the mantle pallium.

The protein resides in the secreted. The chain is EGF-like domain-containing protein 1 from Pinctada maxima (Silver-lipped pearl oyster).